A 544-amino-acid chain; its full sequence is MPNGSIRNCANAVADTVRQTFSRKTWEHKEQLQTITEQKKFFLRKVRWQIAILAHFGFAISFGIRSNFGVAKNRMVNNFTDAYGEVHEREFLWTGAEVGMMESSFFYGYAASQIPAGVLAAKFAPNKIFMLGILVASFMNILSAISFNFHPYTDIFVMVVQAVQGLALGVLYPAMHGVWKFWAPPLERSKLATTAFTGSSVGVMTGLPASAYLVSHFSWSTPFYVFGVVGIIWSLIWMYVSSHSPETHGYISDDEKKQVTEKIGDVAVKNMSLTTLPWRDMMTSSAVWAIIICTFCRSWGFFLLLGNQLTYMKDVLHIDIKNSGFISIFPQFGMCIVTLATGQLCDYLRSSGKMSTEAVRKSVNTFGFTVEAMMLGCLAFVRDPVIAVTCLVIACTGSGSVLSGFNVNHFDIAPRYAPILMGIANGLGAVAGVGGMVTNTVTYQNPDGWKWVFLLAMAIDIFGVIFFLIFAKGDVLPWAREPEKEETFNEFVRRMSIKVRSLSRKTRNREGDTSYEKMEEDSEMKPCSKKVEARAPAEKSESSS.

Residues Met1–Gln49 lie on the Cytoplasmic side of the membrane. The helical transmembrane segment at Ile50–Val70 threads the bilayer. The Extracellular segment spans residues Ala71 to Ser104. N-linked (GlcNAc...) asparagine glycosylation is present at Asn78. The helical transmembrane segment at Phe105 to Pro125 threads the bilayer. Over Asn126–Lys127 the chain is Cytoplasmic. Residues Ile128–Asn148 traverse the membrane as a helical segment. At Phe149–Asp154 the chain is on the extracellular side. A helical membrane pass occupies residues Ile155–Met175. Residues His176–Thr193 lie on the Cytoplasmic side of the membrane. The chain crosses the membrane as a helical span at residues Thr194–Val214. Over Ser215–Trp219 the chain is Extracellular. A helical transmembrane segment spans residues Ser220–Val240. The Cytoplasmic segment spans residues Ser241–Ser285. The chain crosses the membrane as a helical span at residues Ala286 to Gly306. Residues Asn307–Ser323 are Extracellular-facing. Residues Gly324–Leu344 traverse the membrane as a helical segment. The Cytoplasmic portion of the chain corresponds to Cys345–Arg360. The helical transmembrane segment at Lys361–Val381 threads the bilayer. The Extracellular portion of the chain corresponds to Arg382–Pro384. Residues Val385–Phe405 traverse the membrane as a helical segment. The Cytoplasmic portion of the chain corresponds to Asn406–Tyr416. Residues Ala417–Val437 traverse the membrane as a helical segment. Over Thr438–Lys450 the chain is Extracellular. A helical transmembrane segment spans residues Trp451–Ala471. The Cytoplasmic segment spans residues Lys472–Ser544. The disordered stretch occupies residues Ser501–Ser544. A compositionally biased stretch (basic and acidic residues) spans Asn508–Ser544.

Belongs to the major facilitator superfamily. Sodium/anion cotransporter family. VGLUT subfamily.

Its subcellular location is the membrane. The sequence is that of Potential vesicular glutamate transporter vglu-3 (vglu-3) from Caenorhabditis elegans.